A 20-amino-acid polypeptide reads, in one-letter code: Protein PR-L2 (20 aa).

The disordered stretch occupies residues 1 to 20 (SVFAFENEQSSTIAPARLYK).

Belongs to the BetVI family.

This Lupinus luteus (European yellow lupine) protein is Protein PR-L2.